The sequence spans 159 residues: Dihydrofolate reductase (159 aa).

A DHFR domain is found at 2-157 (TLSILVAHDL…IPHTFLHLIR (156 aa)). 6-8 (LVA) provides a ligand contact to substrate. NADP(+) is bound by residues 7 to 8 (VA) and 15 to 20 (IGFENQ). Asp-28 contributes to the substrate binding site. An NADP(+)-binding site is contributed by 44–47 (GRKT). Arg-58 contributes to the substrate binding site. NADP(+)-binding positions include 63-66 (LTSD) and 93-98 (FGGQTL). Thr-112 is a substrate binding site.

It belongs to the dihydrofolate reductase family.

It carries out the reaction (6S)-5,6,7,8-tetrahydrofolate + NADP(+) = 7,8-dihydrofolate + NADPH + H(+). Its pathway is cofactor biosynthesis; tetrahydrofolate biosynthesis; 5,6,7,8-tetrahydrofolate from 7,8-dihydrofolate: step 1/1. Its function is as follows. Key enzyme in folate metabolism. Catalyzes an essential reaction for de novo glycine and purine synthesis, and for DNA precursor synthesis. The protein is Dihydrofolate reductase (folA) of Staphylococcus aureus (strain COL).